A 296-amino-acid polypeptide reads, in one-letter code: Protein FAM110A (296 aa).

Disordered regions lie at residues 61 to 97 (NTRQ…PCSG) and 117 to 192 (PVSP…KSDL). Pro residues-rich tracts occupy residues 139 to 148 (PATPPRPPPS) and 161 to 170 (PASPARPYPS).

Belongs to the FAM110 family. In terms of assembly, may interact with CSPP1.

The protein localises to the cytoplasm. Its subcellular location is the cytoskeleton. The protein resides in the microtubule organizing center. It is found in the centrosome. It localises to the spindle pole. In Mus musculus (Mouse), this protein is Protein FAM110A (Fam110a).